The following is a 251-amino-acid chain: 5'-nucleotidase SurE (251 aa).

A divalent metal cation-binding residues include Asp8, Asp9, Ser39, and Asn90.

Belongs to the SurE nucleotidase family. Requires a divalent metal cation as cofactor.

It localises to the cytoplasm. The catalysed reaction is a ribonucleoside 5'-phosphate + H2O = a ribonucleoside + phosphate. In terms of biological role, nucleotidase that shows phosphatase activity on nucleoside 5'-monophosphates. The polypeptide is 5'-nucleotidase SurE (Legionella pneumophila subsp. pneumophila (strain Philadelphia 1 / ATCC 33152 / DSM 7513)).